A 609-amino-acid polypeptide reads, in one-letter code: Proteasome-associated ATPase (609 aa).

The disordered stretch occupies residues 1-24 (MADSERSEAFGTPDDTPLSSNDAA). A coiled-coil region spans residues 19–96 (SSNDAAELEQ…LREEVDRLGQ (78 aa)). 296-301 (GCGKTL) serves as a coordination point for ATP. A docks into pockets in the proteasome alpha-ring region spans residues 608 to 609 (YL).

Belongs to the AAA ATPase family. In terms of assembly, homohexamer. Assembles into a hexameric ring structure that caps the 20S proteasome core. Strongly interacts with the prokaryotic ubiquitin-like protein Pup through a hydrophobic interface; the interacting region of ARC lies in its N-terminal coiled-coil domain. There is one Pup binding site per ARC hexamer ring. Upon ATP-binding, the C-terminus of ARC interacts with the alpha-rings of the proteasome core, possibly by binding to the intersubunit pockets.

Its pathway is protein degradation; proteasomal Pup-dependent pathway. In terms of biological role, ATPase which is responsible for recognizing, binding, unfolding and translocation of pupylated proteins into the bacterial 20S proteasome core particle. May be essential for opening the gate of the 20S proteasome via an interaction with its C-terminus, thereby allowing substrate entry and access to the site of proteolysis. Thus, the C-termini of the proteasomal ATPase may function like a 'key in a lock' to induce gate opening and therefore regulate proteolysis. This Mycobacterium ulcerans (strain Agy99) protein is Proteasome-associated ATPase.